A 231-amino-acid chain; its full sequence is Ribose-5-phosphate isomerase A (231 aa).

Substrate-binding positions include 32–35 (TGST), 85–88 (DGAD), and 98–101 (KGGG). Glu107 (proton acceptor) is an active-site residue. Lys125 is a binding site for substrate.

Belongs to the ribose 5-phosphate isomerase family. In terms of assembly, homodimer.

It catalyses the reaction aldehydo-D-ribose 5-phosphate = D-ribulose 5-phosphate. Its pathway is carbohydrate degradation; pentose phosphate pathway; D-ribose 5-phosphate from D-ribulose 5-phosphate (non-oxidative stage): step 1/1. In terms of biological role, catalyzes the reversible conversion of ribose-5-phosphate to ribulose 5-phosphate. This is Ribose-5-phosphate isomerase A from Burkholderia orbicola (strain MC0-3).